Reading from the N-terminus, the 563-residue chain is Cytochrome b (563 aa).

The next 12 membrane-spanning stretches (helical) occupy residues 36–61, 81–104, 119–141, 193–220, 255–276, 326–345, 358–379, 387–409, 436–454, 458–476, 505–527, and 539–557; these read SYWLGAMVAASFAYTIITGLFLLLYY, SVLLFSHLYGSYIMILLAYIHMFR, WVTGVLLLALTLGASFFGYSLVS, RLLGWHIIMVFLLGVLFLFHFMLSERYG, LSIVLITWGIILFVPNLLANIN, ILTIALLVVGLVILMLLPFL, FWTWIMTTLAVYLVELSVWGYL, TSAQIEFLGPPLVIIGIIVYLWP, ILLGAVGTLSFAATLFNFI, TLINGIILVPLGLFAIYAL, IAFFGIIALFVVSLVLLGLMWTL, and MDLGVILLLWGVAIQLYHY. H87 and H101 together coordinate heme. H198 and H212 together coordinate heme.

The protein belongs to the cytochrome b family. As to quaternary structure, it is a component of at least 2 distinct terminal oxidases, the quinol oxidase (SoxABC) and the alternate quinol oxidase with the core components SoxM and a Rieske Fe-S protein.

The protein resides in the cell membrane. Binds 2 heme groups (b586 and b606) which are not covalently bound to the protein. This chain is Cytochrome b (soxC), found in Sulfolobus acidocaldarius (strain ATCC 33909 / DSM 639 / JCM 8929 / NBRC 15157 / NCIMB 11770).